We begin with the raw amino-acid sequence, 546 residues long: DDB1- and CUL4-associated factor 11 (546 aa).

Residues 1-10 show a composition bias toward polar residues; that stretch reads MGSRNSSSAG. The segment at 1–40 is disordered; it reads MGSRNSSSAGTGSGDPSEGLPRRGAGLRRSEEEEEEDEDV. Residues Ser73 and Ser75 each carry the phosphoserine modification. Positions 79–100 are disordered; sequence HDSAWDGRLGDRYNPPVDATPD. Residues 80-89 are compositionally biased toward basic and acidic residues; it reads DSAWDGRLGD. WD repeat units follow at residues 170 to 210, 216 to 258, 263 to 302, 305 to 345, 353 to 392, 435 to 480, and 481 to 520; these read TYSQ…RKFK, DVGW…TALD, ERRFAVFSIAVSSDGREVLGGANDGCLYVFDREQNRRTLQ, SHED…EDDP, GHQDGITFIDSKGDARYLISNSKDQTIKLWDIRRFSSREG, GVLH…KKLT, and THKACVRDVSWHPFEEKIVSSSWDGNLRLWQYRQAEYFQD. Residues 521 to 546 are disordered; that stretch reads DMPESEEHPSTPAPMSHPSTAFSSPQ. Over residues 537–546 the composition is skewed to polar residues; that stretch reads HPSTAFSSPQ.

As to quaternary structure, interacts with DDB1 and CUL4A.

It functions in the pathway protein modification; protein ubiquitination. Its function is as follows. May function as a substrate receptor for CUL4-DDB1 E3 ubiquitin-protein ligase complex. This is DDB1- and CUL4-associated factor 11 (DCAF11) from Bos taurus (Bovine).